A 593-amino-acid chain; its full sequence is MGIGNSQPNSQEAQLCTLPEKAEQPTDDNTCQQNNVVPATVSEPDQASPAIQDAETQVESIVDKRKNKKGKTEYLVRWKGYDSEDDTWEPEQHLVNCEEYIHDFNRRHNERQKEGSLARASRASPSNARKQISRSTHSTLSKTNSKALVVGKDHESKSSQLLAASQKFRKNPAPSLANRKNMDLAKSGIKILVPKSPVKGRTSVDGFQGESPEKLDPVDQGAEDTVAPEVTAEKPTGALLGPGAERARMGSRPRIHPLVPQVSGPVTAAMATGLAVNGKGTSPFMDALAANGTVTIQTSVTGVTAGKRKFIDDRRDQPFDKRLRFSVRQTESAYRYRDIVVRKQDGFTHILLSTKSSENNSLNPEVMKEVQSALSTAAADDSKLVLLSAVGSVFCCGLDFIYFIRRLTDDRKRESTKMADAIRNFVNTFIQFKKPIIVAVNGPAIGLGASILPLCDVVWANEKAWFQTPYTTFGQSPDGCSTVMFPKIMGGASANEMLFSGRKLTAQEACGKGLVSQVFWPGTFTQEVMVRIKELASCNPVVLEESKALVRCNMKMELEQANERECEVLKKIWGSAQGMDSMLKYLQRKIDEF.

A compositionally biased stretch (polar residues) spans Met-1–Gln-14. Residues Met-1–Thr-30 form a disordered region. The Chromo domain occupies Thr-56–Ser-116. The segment at Thr-56–Thr-304 is interaction with EZH2. The residue at position 83 (Ser-83) is a Phosphoserine. Residues Glu-110 to Ser-158 form a disordered region. The span at Leu-117–Arg-129 shows a compositional bias: low complexity. Lys-130 carries the post-translational modification N6,N6,N6-trimethyllysine; by EHMT2; alternate. At Lys-130 the chain carries N6,N6-dimethyllysine; by EHMT2; alternate. Lys-130 carries the post-translational modification N6-methyllysine; by EHMT2; alternate. The segment covering Ser-133–Lys-146 has biased composition (polar residues). Ser-165, Ser-196, and Ser-211 each carry phosphoserine. The tract at residues Gly-200–Glu-223 is disordered. The segment at Ser-357 to Lys-589 is acetyl-CoA-binding domain.

In terms of assembly, forms multimers and multimerization is required for stable binding to chromatin. Interacts with HDAC1 and HDAC2 via its C-terminal acetyl-CoA-binding domain. Interacts with EZH2, EED, SUZ12, REST, EHMT1 and EHMT2. Part of a complex containing at least CDYL, REST, WIZ, SETB1, EHMT1 and EHMT2. Part of a complex containing at least CDYL, MIER1, MIER2, HDAC1 and HDAC2. Interacts with CHAF1A and CHAF1B; bridging the CAF-1 complex to the MCM2-7 (MCM) complex. Interacts with MCM3 and MCM5; bridging the CAF-1 complex to the MCM2-7 (MCM) complex. Interacts with EHMT2 and PRDM9; interaction only takes place when PRDM9 is bound to hotspot DNA. In terms of tissue distribution, highly expressed in testis (at protein level). Expressed in the hippocampus (at protein level). Expressed in the medial prefrontal cortex, prelimbic cortex, intralimbic cortex and cingulate cortex area (at protein level). Isoform 1: Expressed as 2 transcripts encoding the same protein, a ubiquitous transcript and a highly expressed testis-specific transcript.

It is found in the nucleus. It localises to the chromosome. It catalyses the reaction L-lysyl-[protein] + acetyl-CoA = N(6)-acetyl-L-lysyl-[protein] + CoA + H(+). The enzyme catalyses 3-hydroxybutanoyl-CoA = (2E)-butenoyl-CoA + H2O. Its function is as follows. Chromatin reader protein that recognizes and binds histone H3 trimethylated at 'Lys-9', dimethylated at 'Lys-27' and trimethylated at 'Lys-27' (H3K9me3, H3K27me2 and H3K27me3, respectively). Part of multimeric repressive chromatin complexes, where it is required for transmission and restoration of repressive histone marks, thereby preserving the epigenetic landscape. Required for chromatin targeting and maximal enzymatic activity of Polycomb repressive complex 2 (PRC2); acts as a positive regulator of PRC2 activity by bridging the pre-existing histone H3K27me3 and newly recruited PRC2 on neighboring nucleosomes. Acts as a corepressor for REST by facilitating histone-lysine N-methyltransferase EHMT2 recruitment and H3K9 dimethylation at REST target genes for repression. Involved in X chromosome inactivation in females: recruited to Xist RNA-coated X chromosome and facilitates propagation of H3K9me2 by anchoring EHMT2. Promotes EZH2 accumulation and H3K27me3 methylation at DNA double strand breaks (DSBs), thereby facilitating transcriptional repression at sites of DNA damage and homology-directed repair of DSBs. Required for neuronal migration during brain development by repressing expression of RHOA. By repressing the expression of SCN8A, contributes to the inhibition of intrinsic neuronal excitability and epileptogenesis. In addition to acting as a chromatin reader, acts as a hydro-lyase. Shows crotonyl-coA hydratase activity by mediating the conversion of crotonyl-CoA ((2E)-butenoyl-CoA) to beta-hydroxybutyryl-CoA (3-hydroxybutanoyl-CoA), thereby acting as a negative regulator of histone crotonylation. Histone crotonylation is required during spermatogenesis; down-regulation of histone crotonylation by CDYL regulates the reactivation of sex chromosome-linked genes in round spermatids and histone replacement in elongating spermatids. By regulating histone crotonylation and trimethylation of H3K27, may be involved in stress-induced depression-like behaviors, possibly by regulating VGF expression. May have histone acetyltransferase activity; such activity is however unsure in vivo. In terms of biological role, not able to recognize and bind histone H3K9me3, histone H3K27me2 and histone H3K27me3, due to the presence of a N-terminal extension that inactivates the chromo domain. This chain is Chromodomain Y-like protein, found in Mus musculus (Mouse).